A 134-amino-acid chain; its full sequence is Small ribosomal subunit protein uS11 (134 aa).

Belongs to the universal ribosomal protein uS11 family. As to quaternary structure, part of the 30S ribosomal subunit. Interacts with proteins S7 and S18. Binds to IF-3.

Functionally, located on the platform of the 30S subunit, it bridges several disparate RNA helices of the 16S rRNA. Forms part of the Shine-Dalgarno cleft in the 70S ribosome. The polypeptide is Small ribosomal subunit protein uS11 (Corynebacterium diphtheriae (strain ATCC 700971 / NCTC 13129 / Biotype gravis)).